Here is a 977-residue protein sequence, read N- to C-terminus: Zinc finger CCCH domain-containing protein 7B (977 aa).

TPR repeat units follow at residues 1-27 (MERQKRKADIEKGLQFIQSTLPLKQEE), 36-69 (VQNLFAEGNDLFREKDYKQALVQYMEGLNVADYA), and 82-115 (CKLHVNRAACYFTMGLYEKALEDSEKALGLDSES). At Ser-217 the chain carries Phosphoserine. Residues 248 to 256 (STDSLDDFS) carry the LD motif; interaction with NSP3 motif. Residues Ser-364 and Ser-367 each carry the phosphoserine modification. Residues 365-403 (FGSTRGSLDKPDSFMEETNSQDHRPPSGAQKPAPSPEPC) are disordered. 3 C3H1-type zinc fingers span residues 484 to 508 (LCKDMINKQDCKYGDNCTFAYHQEE), 616 to 638 (VCRHEVRYGCLREDSCHFAHSFI), and 754 to 782 (PQQYDLCIHAQNGRKCQYVGNCSFAHSPE). A C2H2-type zinc finger spans residues 842-866 (YHCWLCGKNSNSKKQWQQHIQSEKH). The segment at 886–914 (MGEFRLCDRLQKGKACPDGDKCRCAHGQE) adopts a C3H1-type 4 zinc-finger fold.

As to quaternary structure, (Microbial infection) Interacts (via LD motif) with rotavirus A NSP3 (via the coiled-coil region).

It is found in the nucleus. May be a specific regulator of miRNA biogenesis. Binds to microRNAs MIR7-1, MIR16-2 and MIR29A hairpins recognizing the 'ATA(A/T)' motif in the apical loop. This is Zinc finger CCCH domain-containing protein 7B (ZC3H7B) from Homo sapiens (Human).